Consider the following 390-residue polypeptide: Flap endonuclease 1 (390 aa).

An N-domain region spans residues 1-111 (MGIKGLAKLL…GELLKRREKR (111 aa)). D34 serves as a coordination point for Mg(2+). The DNA site is built by R47 and R77. Mg(2+) is bound by residues D93, E165, E167, D186, and D188. Residues 129–260 (EQDKQSKRLV…KTALKLIREH (132 aa)) form an I-domain region. E165 lines the DNA pocket. G238 and D240 together coordinate DNA. Residue D240 participates in Mg(2+) binding. Residues 342–390 (KPQSRMDSFFKVKANPEGDKKKAEKRKAELAASRGKGKKGKGGGGFKKK) form a disordered region. Residues 343 to 351 (PQSRMDSFF) form an interaction with PCNA region. A compositionally biased stretch (basic and acidic residues) spans 349 to 370 (SFFKVKANPEGDKKKAEKRKAE). Positions 376–390 (GKGKKGKGGGGFKKK) are enriched in basic residues.

Belongs to the XPG/RAD2 endonuclease family. FEN1 subfamily. Interacts with PCNA. Three molecules of FEN1 bind to one PCNA trimer with each molecule binding to one PCNA monomer. PCNA stimulates the nuclease activity without altering cleavage specificity. Mg(2+) serves as cofactor. In terms of processing, phosphorylated. Phosphorylation upon DNA damage induces relocalization to the nuclear plasma.

The protein localises to the nucleus. Its subcellular location is the nucleolus. The protein resides in the nucleoplasm. It localises to the mitochondrion. In terms of biological role, structure-specific nuclease with 5'-flap endonuclease and 5'-3' exonuclease activities involved in DNA replication and repair. During DNA replication, cleaves the 5'-overhanging flap structure that is generated by displacement synthesis when DNA polymerase encounters the 5'-end of a downstream Okazaki fragment. It enters the flap from the 5'-end and then tracks to cleave the flap base, leaving a nick for ligation. Also involved in the long patch base excision repair (LP-BER) pathway, by cleaving within the apurinic/apyrimidinic (AP) site-terminated flap. Acts as a genome stabilization factor that prevents flaps from equilibrating into structures that lead to duplications and deletions. Also possesses 5'-3' exonuclease activity on nicked or gapped double-stranded DNA, and exhibits RNase H activity. Also involved in replication and repair of rDNA and in repairing mitochondrial DNA. The chain is Flap endonuclease 1 from Thalassiosira pseudonana (Marine diatom).